The sequence spans 220 residues: Telomere repeats-binding bouquet formation protein 2 (220 aa).

This sequence belongs to the TERB2 family. In terms of assembly, component of the MAJIN-TERB1-TERB2 complex, composed of MAJIN, TERB1 and TERB2.

It is found in the chromosome. Its subcellular location is the telomere. The protein localises to the nucleus inner membrane. In terms of biological role, meiosis-specific telomere-associated protein involved in meiotic telomere attachment to the nucleus inner membrane, a crucial step for homologous pairing and synapsis. Component of the MAJIN-TERB1-TERB2 complex, which promotes telomere cap exchange by mediating attachment of telomeric DNA to the inner nuclear membrane and replacement of the protective cap of telomeric chromosomes: in early meiosis, the MAJIN-TERB1-TERB2 complex associates with telomeric DNA and the shelterin/telosome complex. During prophase, the complex matures and promotes release of the shelterin/telosome complex from telomeric DNA. In Homo sapiens (Human), this protein is Telomere repeats-binding bouquet formation protein 2 (TERB2).